We begin with the raw amino-acid sequence, 321 residues long: Aspartate carbamoyltransferase catalytic subunit (321 aa).

The carbamoyl phosphate site is built by Arg64 and Thr65. Lys92 lines the L-aspartate pocket. Carbamoyl phosphate contacts are provided by Arg114, His142, and Gln145. Positions 175 and 229 each coordinate L-aspartate. Gly270 and Pro271 together coordinate carbamoyl phosphate.

The protein belongs to the aspartate/ornithine carbamoyltransferase superfamily. ATCase family. Heterododecamer (2C3:3R2) of six catalytic PyrB chains organized as two trimers (C3), and six regulatory PyrI chains organized as three dimers (R2).

The enzyme catalyses carbamoyl phosphate + L-aspartate = N-carbamoyl-L-aspartate + phosphate + H(+). The protein operates within pyrimidine metabolism; UMP biosynthesis via de novo pathway; (S)-dihydroorotate from bicarbonate: step 2/3. Catalyzes the condensation of carbamoyl phosphate and aspartate to form carbamoyl aspartate and inorganic phosphate, the committed step in the de novo pyrimidine nucleotide biosynthesis pathway. This is Aspartate carbamoyltransferase catalytic subunit from Azorhizobium caulinodans (strain ATCC 43989 / DSM 5975 / JCM 20966 / LMG 6465 / NBRC 14845 / NCIMB 13405 / ORS 571).